Reading from the N-terminus, the 731-residue chain is Putative beta-galactosidase (731 aa).

Residues 1–29 form the signal peptide; that stretch reads MLCGKENNVMKMMLVYVFVLITLISCVYG. The Proton donor role is filled by Glu-187. The active-site Nucleophile is the Glu-257.

It belongs to the glycosyl hydrolase 35 family. In terms of tissue distribution, senescing flower petals.

It carries out the reaction Hydrolysis of terminal non-reducing beta-D-galactose residues in beta-D-galactosides.. This Dianthus caryophyllus (Carnation) protein is Putative beta-galactosidase (CARSR12).